The primary structure comprises 335 residues: Beta-ketoacyl-[acyl-carrier-protein] synthase III (335 aa).

Residues Cys119 and His261 contribute to the active site. The interval 262-266 is ACP-binding; that stretch reads QANQR. Residue Asn291 is part of the active site.

The protein belongs to the thiolase-like superfamily. FabH family. Homodimer.

It is found in the cytoplasm. The catalysed reaction is malonyl-[ACP] + acetyl-CoA + H(+) = 3-oxobutanoyl-[ACP] + CO2 + CoA. It functions in the pathway lipid metabolism; fatty acid biosynthesis. Catalyzes the condensation reaction of fatty acid synthesis by the addition to an acyl acceptor of two carbons from malonyl-ACP. Catalyzes the first condensation reaction which initiates fatty acid synthesis and may therefore play a role in governing the total rate of fatty acid production. Possesses both acetoacetyl-ACP synthase and acetyl transacylase activities. Its substrate specificity determines the biosynthesis of branched-chain and/or straight-chain of fatty acids. The sequence is that of Beta-ketoacyl-[acyl-carrier-protein] synthase III from Prochlorococcus marinus subsp. pastoris (strain CCMP1986 / NIES-2087 / MED4).